Reading from the N-terminus, the 585-residue chain is A-type ATP synthase subunit A (585 aa).

Residue 235-242 coordinates ATP; sequence GPFGSGKT.

This sequence belongs to the ATPase alpha/beta chains family. In terms of assembly, has multiple subunits with at least A(3), B(3), C, D, E, F, H, I and proteolipid K(x).

Its subcellular location is the cell membrane. The enzyme catalyses ATP + H2O + 4 H(+)(in) = ADP + phosphate + 5 H(+)(out). Component of the A-type ATP synthase that produces ATP from ADP in the presence of a proton gradient across the membrane. The A chain is the catalytic subunit. The chain is A-type ATP synthase subunit A from Halobacterium salinarum (strain ATCC 29341 / DSM 671 / R1).